We begin with the raw amino-acid sequence, 459 residues long: Bifunctional protein GlmU (459 aa).

A pyrophosphorylase region spans residues 1–229; sequence MSNFAIILAA…FDESLGVNDR (229 aa). Residues 8–11, lysine 22, glutamine 72, 77–78, 101–102, glycine 139, glutamate 154, asparagine 169, and asparagine 227 each bind UDP-N-acetyl-alpha-D-glucosamine; these read LAAG, GT, and GD. A Ca(2+)-binding site is contributed by aspartate 102. Residue aspartate 102 participates in Mg(2+) binding. Asparagine 227 lines the Ca(2+) pocket. Asparagine 227 contacts Mg(2+). A linker region spans residues 230–250; sequence VALATAESVMRRRINHKHMVN. Residues 251-459 are N-acetyltransferase; that stretch reads GVSFVNPEAT…TRLPHHPKNQ (209 aa). 2 residues coordinate UDP-N-acetyl-alpha-D-glucosamine: arginine 332 and lysine 350. Residue histidine 362 is the Proton acceptor of the active site. UDP-N-acetyl-alpha-D-glucosamine-binding residues include tyrosine 365 and asparagine 376. Residues alanine 379, 385 to 386, serine 404, alanine 422, and arginine 439 each bind acetyl-CoA; that span reads NY.

This sequence in the N-terminal section; belongs to the N-acetylglucosamine-1-phosphate uridyltransferase family. The protein in the C-terminal section; belongs to the transferase hexapeptide repeat family. As to quaternary structure, homotrimer. Mg(2+) serves as cofactor. Ca(2+) is required as a cofactor.

The protein localises to the cytoplasm. The enzyme catalyses alpha-D-glucosamine 1-phosphate + acetyl-CoA = N-acetyl-alpha-D-glucosamine 1-phosphate + CoA + H(+). It carries out the reaction N-acetyl-alpha-D-glucosamine 1-phosphate + UTP + H(+) = UDP-N-acetyl-alpha-D-glucosamine + diphosphate. It participates in nucleotide-sugar biosynthesis; UDP-N-acetyl-alpha-D-glucosamine biosynthesis; N-acetyl-alpha-D-glucosamine 1-phosphate from alpha-D-glucosamine 6-phosphate (route II): step 2/2. The protein operates within nucleotide-sugar biosynthesis; UDP-N-acetyl-alpha-D-glucosamine biosynthesis; UDP-N-acetyl-alpha-D-glucosamine from N-acetyl-alpha-D-glucosamine 1-phosphate: step 1/1. It functions in the pathway bacterial outer membrane biogenesis; LPS lipid A biosynthesis. Catalyzes the last two sequential reactions in the de novo biosynthetic pathway for UDP-N-acetylglucosamine (UDP-GlcNAc). The C-terminal domain catalyzes the transfer of acetyl group from acetyl coenzyme A to glucosamine-1-phosphate (GlcN-1-P) to produce N-acetylglucosamine-1-phosphate (GlcNAc-1-P), which is converted into UDP-GlcNAc by the transfer of uridine 5-monophosphate (from uridine 5-triphosphate), a reaction catalyzed by the N-terminal domain. This Streptococcus pneumoniae serotype 4 (strain ATCC BAA-334 / TIGR4) protein is Bifunctional protein GlmU.